The sequence spans 3164 residues: Genome polyprotein (3164 aa).

The 144-residue stretch at 219–362 (KMNDQGVDML…RTMSHKIVHF (144 aa)) folds into the Peptidase S30 domain. Active-site for P1 proteinase activity residues include His-270, Asp-279, and Ser-313. The Involved in interaction with stylet and aphid transmission signature appears at 414–417 (KITC). The Involved in virions binding and aphid transmission motif lies at 672–674 (PTK). Residues 698–820 (MYIAKEGYCY…ESSLKHYRVG (123 aa)) form the Peptidase C6 domain. Residues Cys-706 and His-779 each act as for helper component proteinase activity in the active site. A Helicase ATP-binding domain is found at 1300–1452 (KIAHESDKDI…TQYPVSISTE (153 aa)). 1313–1320 (GAVGSGKS) serves as a coordination point for ATP. Positions 1402–1405 (DECH) match the DEAH box motif. The 160-residue stretch at 1471-1630 (DVISKGDNIL…GLPVITNNVS (160 aa)) folds into the Helicase C-terminal domain. Residues 1872 to 1889 (NTSDMSKFLKLKGKWNKT) are Cytoplasmic-facing. The helical transmembrane segment at 1890 to 1910 (LITRDVLVLCGVLGGGLWMVI) threads the bilayer. At 1911–1924 (QHLRSKMSEPVTHE) the chain is on the lumenal side. The Nuclear localization signal motif lies at 1965 to 1972 (KKGKSKGR). Tyr-1987 bears the O-(5'-phospho-RNA)-tyrosine mark. The 219-residue stretch at 2117 to 2335 (SNSMFRGLRD…ISWGSLNIQA (219 aa)) folds into the Peptidase C4 domain. Active-site for nuclear inclusion protein A activity residues include His-2162, Asp-2197, and Cys-2267. The 125-residue stretch at 2601-2725 (WVYCDADGSQ…SVHPEYEYIL (125 aa)) folds into the RdRp catalytic domain. The segment at 2884 to 2935 (GLTDEQKQAEKEKKEREKAEKERERQKQLALKKGKDVAQEEGKRDKEVNAGT) is disordered. Basic and acidic residues predominate over residues 2887 to 2931 (DEQKQAEKEKKEREKAEKERERQKQLALKKGKDVAQEEGKRDKEV). Position 3147 is a phosphothreonine (Thr-3147).

It belongs to the potyviridae genome polyprotein family. In terms of assembly, interacts with host eIF4E protein (via cap-binding region); this interaction mediates the translation of the VPg-viral RNA conjugates. Part of a complex that comprises VPg, RNA, host EIF4E and EIF4G; this interaction mediates the translation of the VPg-viral RNA conjugates. As to quaternary structure, interacts, via N-terminal region, with host Sec24a protein in COPII-coated vesicles. This binding triggers the formation of host endoplasmic reticulum (ER)-derived viral vesicles involved in cell-to-cell viral movement. Post-translationally, VPg is uridylylated by the polymerase and is covalently attached to the 5'-end of the genomic RNA. This uridylylated form acts as a nucleotide-peptide primer for the polymerase. Potyviral RNA is expressed as two polyproteins which undergo post-translational proteolytic processing. Genome polyprotein is processed by NIa-pro, P1 and HC-pro proteinases resulting in the production of at least ten individual proteins. P3N-PIPO polyprotein is cleaved by P1 and HC-pro proteinases resulting in the production of three individual proteins. The P1 proteinase and the HC-pro cleave only their respective C-termini autocatalytically. 6K1 is essential for proper proteolytic separation of P3 from CI.

Its subcellular location is the host cytoplasm. It is found in the host nucleus. It localises to the host cytoplasmic vesicle. The protein resides in the host membrane. The protein localises to the virion. The catalysed reaction is RNA(n) + a ribonucleoside 5'-triphosphate = RNA(n+1) + diphosphate. It carries out the reaction Hydrolyzes glutaminyl bonds, and activity is further restricted by preferences for the amino acids in P6 - P1' that vary with the species of potyvirus, e.g. Glu-Xaa-Xaa-Tyr-Xaa-Gln-|-(Ser or Gly) for the enzyme from tobacco etch virus. The natural substrate is the viral polyprotein, but other proteins and oligopeptides containing the appropriate consensus sequence are also cleaved.. It catalyses the reaction Hydrolyzes a Gly-|-Gly bond at its own C-terminus, commonly in the sequence -Tyr-Xaa-Val-Gly-|-Gly, in the processing of the potyviral polyprotein.. Cysteine protease that cleaves a Gly-Gly dipeptide at its own C-terminus. Required for aphid transmission and also has proteolytic activity. Interacts with virions and aphid stylets. Acts as a suppressor of RNA-mediated gene silencing, also known as post-transcriptional gene silencing (PTGS), a mechanism of plant viral defense that limits the accumulation of viral RNAs. May have RNA-binding activity. Its function is as follows. Has helicase activity. It may be involved in replication. Functionally, indispensable for virus replication. Reduces the abundance of host transcripts related to jasmonic acid biosynthesis therefore altering the host defenses. In order to increase its own stability, decreases host protein degradation pathways. In terms of biological role, responsible for the formation of peripheral motile host endoplasmic reticulum (ER)-derived viral vesicles called 'viral factories', seat of the viral RNA (vRNA) replication and carrying vRNA to plasmodesmata for delivery into adjacent non-infected cells; this process relies on host Sec24a-binding. Mediates the cap-independent, EIF4E-dependent translation of viral genomic RNAs. Binds to the cap-binding site of host EIF4E and thus interferes with the host EIF4E-dependent mRNA export and translation. VPg-RNA directly binds EIF4E and is a template for transcription. Also forms trimeric complexes with EIF4E-EIF4G, which are templates for translation. Its function is as follows. Has RNA-binding and proteolytic activities. Functionally, RNA-dependent RNA polymerase that ensures transcription and replication of viral RNA (vRNA). In terms of biological role, involved in aphid transmission, cell-to-cell and systemis movement, encapsidation of the viral RNA and in the regulation of viral RNA amplification. The sequence is that of Genome polyprotein from Turnip mosaic virus (strain Japanese) (TuMV).